Reading from the N-terminus, the 444-residue chain is Protein kinase C and casein kinase substrate in neurons protein 1 (444 aa).

Phosphoserine is present on residues S2 and S79. The F-BAR domain maps to 13-283; the sequence is EETTDSFWEV…AIRGADAQED (271 aa). A coiled-coil region spans residues 26–275; the sequence is KRTVKRIDDG…HVYRELEQAI (250 aa). 2 disordered regions span residues 173–194 and 309–386; these read REMN…LQDK and LPHT…DDSK. T184 is modified (phosphothreonine). Basic and acidic residues predominate over residues 314 to 324; it reads TKKEKQPKKAE. The span at 329–351 shows a compositional bias: polar residues; sequence TNATGAVESTSQAGDRGSVSSYD. Residues S346, S348, S349, S361, and S365 each carry the phosphoserine modification. Positions 385–444 constitute an SH3 domain; it reads SKGVRVRALYDYDGQEQDELSFKAGDELTKLGEEDEQGWCRGRLDSGQLGLYPANYVEAI. Position 394 is a phosphotyrosine (Y394). 2 positions are modified to phosphoserine: S405 and S430.

The protein belongs to the PACSIN family. Homodimer. May form heterooligomers with other PACSINs. Interacts with both COBL and DBNL. Identified in a complex composed of COBL, PACSIN1 and WASL. Interacts (via SH3 domain) with SYNJ1 and WASL. Interacts (via SH3 domain) with DNM1; the interaction is reduced by DNM1 phosphorylation. Interacts with DNM2 and DNM3. Interacts with MAPT. Interacts with EHD1 and EHD3. Interacts with TRPV4. In terms of processing, phosphorylated by casein kinase 2 (CK2) and protein kinase C (PKC).

The protein resides in the cytoplasm. Its subcellular location is the cell projection. The protein localises to the synapse. It is found in the synaptosome. It localises to the ruffle membrane. The protein resides in the membrane. Its subcellular location is the cytoplasmic vesicle membrane. The protein localises to the cytosol. It is found in the cell membrane. Binds to membranes via its F-BAR domain and mediates membrane tubulation. Plays a role in the reorganization of the microtubule cytoskeleton via its interaction with MAPT; this decreases microtubule stability and inhibits MAPT-induced microtubule polymerization. Plays a role in cellular transport processes by recruiting DNM1, DNM2 and DNM3 to membranes. Plays a role in the reorganization of the actin cytoskeleton and in neuron morphogenesis via its interaction with COBL and WASL, and by recruiting COBL to the cell cortex. Plays a role in the regulation of neurite formation, neurite branching and the regulation of neurite length. Required for normal synaptic vesicle endocytosis; this process retrieves previously released neurotransmitters to accommodate multiple cycles of neurotransmission. Required for normal excitatory and inhibitory synaptic transmission. The chain is Protein kinase C and casein kinase substrate in neurons protein 1 (Pacsin1) from Pongo abelii (Sumatran orangutan).